The sequence spans 159 residues: Protein Smg homolog (159 aa).

This sequence belongs to the Smg family.

The protein is Protein Smg homolog of Dichelobacter nodosus (strain VCS1703A).